The following is a 355-amino-acid chain: Phosphoribosylformylglycinamidine cyclo-ligase (355 aa).

The protein belongs to the AIR synthase family.

The protein resides in the cytoplasm. It catalyses the reaction 2-formamido-N(1)-(5-O-phospho-beta-D-ribosyl)acetamidine + ATP = 5-amino-1-(5-phospho-beta-D-ribosyl)imidazole + ADP + phosphate + H(+). The protein operates within purine metabolism; IMP biosynthesis via de novo pathway; 5-amino-1-(5-phospho-D-ribosyl)imidazole from N(2)-formyl-N(1)-(5-phospho-D-ribosyl)glycinamide: step 2/2. The sequence is that of Phosphoribosylformylglycinamidine cyclo-ligase from Paraburkholderia xenovorans (strain LB400).